Here is a 44-residue protein sequence, read N- to C-terminus: Photosystem II reaction center protein K (44 aa).

The propeptide occupies 1–7 (MTTLLLA). Residues 19-39 (IVDVLPVIPLLFLLLAFVWQA) traverse the membrane as a helical segment.

It belongs to the PsbK family. As to quaternary structure, PSII is composed of 1 copy each of membrane proteins PsbA, PsbB, PsbC, PsbD, PsbE, PsbF, PsbH, PsbI, PsbJ, PsbK, PsbL, PsbM, PsbT, PsbX, PsbY, PsbZ, Psb30/Ycf12, at least 3 peripheral proteins of the oxygen-evolving complex and a large number of cofactors. It forms dimeric complexes.

It localises to the plastid. Its subcellular location is the chloroplast thylakoid membrane. Functionally, one of the components of the core complex of photosystem II (PSII). PSII is a light-driven water:plastoquinone oxidoreductase that uses light energy to abstract electrons from H(2)O, generating O(2) and a proton gradient subsequently used for ATP formation. It consists of a core antenna complex that captures photons, and an electron transfer chain that converts photonic excitation into a charge separation. This chain is Photosystem II reaction center protein K, found in Tupiella akineta (Green alga).